A 304-amino-acid chain; its full sequence is Putative dihydroorotate dehydrogenase A (fumarate) (304 aa).

FMN contacts are provided by residues Ser-22 and 46-47 (KG). Substrate contacts are provided by residues Lys-46 and 70 to 74 (NSVGL). Residues Asn-100 and Asn-128 each contribute to the FMN site. Asn-128 provides a ligand contact to substrate. The active-site Nucleophile is the Cys-131. The FMN site is built by Lys-166 and Val-192. 193-194 (NT) is a substrate binding site. Residues Gly-218, 244 to 245 (GG), and 266 to 267 (GT) contribute to the FMN site.

It belongs to the dihydroorotate dehydrogenase family. Type 1 subfamily. As to quaternary structure, homodimer. Requires FMN as cofactor.

Its subcellular location is the cytoplasm. The enzyme catalyses (S)-dihydroorotate + fumarate = orotate + succinate. It functions in the pathway pyrimidine metabolism; UMP biosynthesis via de novo pathway. Functionally, catalyzes the conversion of dihydroorotate to orotate with fumarate as the electron acceptor. This chain is Putative dihydroorotate dehydrogenase A (fumarate) (pyrD), found in Solibacter usitatus (strain Ellin6076).